We begin with the raw amino-acid sequence, 125 residues long: CLAVATA3/ESR (CLE)-related protein ESR3 (125 aa).

The first 26 residues, Met-1–Ala-26, serve as a signal peptide directing secretion. A disordered region spans residues Gln-45–Tyr-125. Pro-75 and Pro-78 each carry hydroxyproline. Pro-78 carries O-linked (Ara...) hydroxyproline glycosylation.

Belongs to the CLV3/ESR signal peptide family. In terms of processing, the O-glycosylation (arabinosylation) of the hydroxyproline Pro-78 enhances binding affinity of the ESR3p peptide for its receptor. In terms of tissue distribution, seed endosperm.

It localises to the secreted. The protein localises to the extracellular space. Functionally, extracellular signal peptide that regulates cell fate. The protein is CLAVATA3/ESR (CLE)-related protein ESR3 of Zea mays (Maize).